Here is a 110-residue protein sequence, read N- to C-terminus: Large ribosomal subunit protein uL22 (110 aa).

It belongs to the universal ribosomal protein uL22 family. Part of the 50S ribosomal subunit.

In terms of biological role, this protein binds specifically to 23S rRNA; its binding is stimulated by other ribosomal proteins, e.g. L4, L17, and L20. It is important during the early stages of 50S assembly. It makes multiple contacts with different domains of the 23S rRNA in the assembled 50S subunit and ribosome. Its function is as follows. The globular domain of the protein is located near the polypeptide exit tunnel on the outside of the subunit, while an extended beta-hairpin is found that lines the wall of the exit tunnel in the center of the 70S ribosome. This is Large ribosomal subunit protein uL22 from Enterobacter sp. (strain 638).